The chain runs to 374 residues: RNA polymerase sigma factor SigA (374 aa).

The tract at residues 141 to 211 (LAEANLRLVV…TRAIADQART (71 aa)) is sigma-70 factor domain-2. An Interaction with polymerase core subunit RpoC motif is present at residues 165–168 (DLIQ). A sigma-70 factor domain-3 region spans residues 220–296 (ETINKLIRVQ…DQDATSPSDH (77 aa)). The interval 309–362 (VLDTLTDREENVLRLRFGLDDGRTRTLEEVGRVFGVTRERIRQIEAKALRKLRH) is sigma-70 factor domain-4. A DNA-binding region (H-T-H motif) is located at residues 335-354 (LEEVGRVFGVTRERIRQIEA).

This sequence belongs to the sigma-70 factor family. RpoD/SigA subfamily. In terms of assembly, interacts transiently with the RNA polymerase catalytic core.

The protein localises to the cytoplasm. Functionally, sigma factors are initiation factors that promote the attachment of RNA polymerase to specific initiation sites and are then released. This sigma factor is the primary sigma factor during exponential growth. The polypeptide is RNA polymerase sigma factor SigA (Listeria innocua serovar 6a (strain ATCC BAA-680 / CLIP 11262)).